The primary structure comprises 368 residues: Methylthioribose-1-phosphate isomerase (368 aa).

Substrate-binding positions include 54–56, R91, and Q204; that span reads RGA. D245 (proton donor) is an active-site residue. Residue 255–256 participates in substrate binding; it reads NK.

It belongs to the eIF-2B alpha/beta/delta subunits family. MtnA subfamily.

It catalyses the reaction 5-(methylsulfanyl)-alpha-D-ribose 1-phosphate = 5-(methylsulfanyl)-D-ribulose 1-phosphate. The protein operates within amino-acid biosynthesis; L-methionine biosynthesis via salvage pathway; L-methionine from S-methyl-5-thio-alpha-D-ribose 1-phosphate: step 1/6. In terms of biological role, catalyzes the interconversion of methylthioribose-1-phosphate (MTR-1-P) into methylthioribulose-1-phosphate (MTRu-1-P). This Gluconobacter oxydans (strain 621H) (Gluconobacter suboxydans) protein is Methylthioribose-1-phosphate isomerase.